A 527-amino-acid chain; its full sequence is F-box-like/WD repeat-containing protein TBL1X (527 aa).

Ser2 is subject to N-acetylserine. In terms of domain architecture, LisH spans 4–36 (TSDEVNFLVYRYLQESGFSHSAFTFGIESHISQ). The 46-residue stretch at 41–86 (GTLVPPAALISILQKGLQYVEAEISINEDGTVFDGRPIESLSLIDA) folds into the F-box-like domain. At Lys102 the chain carries N6-acetyllysine. Residues 127–164 (TTPAAAAQQNPPKNGEATVNGEENGAHAINNHSKPMEI) are disordered. WD repeat units lie at residues 180-219 (GHES…NGGS), 236-275 (PSNK…ASTL), 277-316 (QHKG…AKQQ), 319-359 (FHSA…KTFQ), 360-399 (GHTN…CVHD), 402-450 (AHSK…CIHT), 453-492 (KHQE…LVHS), and 494-526 (RGTG…LDLR). A Glycyl lysine isopeptide (Lys-Gly) (interchain with G-Cter in SUMO2) cross-link involves residue Lys290.

It belongs to the WD repeat EBI family. As to quaternary structure, homotetramer; dimer of dimers. Component of the N-Cor repressor complex, at least composed of NCOR1, NCOR2, HDAC3, TBL1X, TBL1R, CORO2A and GPS2. Component of a E3 ubiquitin ligase complex containing UBE2D1, SIAH1, CACYBP/SIP, SKP1, APC and TBL1X. Interacts with GPS2 (when sumoylated); leading to protect GPS2 against degradation by the proteasome. Probably part of other corepressor complexes, that do not contain NCOR1 and NCOR2. Interacts with histones H2B, H3a and H4. Interacts with MECP2; recruits TBL1X to the heterochromatin foci. Interacts with USP44. In terms of tissue distribution, expressed in the cochlea.

The protein resides in the nucleus. Functionally, F-box-like protein involved in the recruitment of the ubiquitin/19S proteasome complex to nuclear receptor-regulated transcription units. Plays an essential role in transcription activation mediated by nuclear receptors. Probably acts as integral component of corepressor complexes that mediates the recruitment of the 19S proteasome complex, leading to the subsequent proteasomal degradation of transcription repressor complexes, thereby allowing cofactor exchange. This is F-box-like/WD repeat-containing protein TBL1X (Tbl1x) from Mus musculus (Mouse).